The primary structure comprises 512 residues: D-alanine--D-alanyl carrier protein ligase (512 aa).

Residue 152-153 (TS) coordinates ATP. Residue aspartate 199 participates in D-alanine binding. 294 to 299 (NAYGPT) is a binding site for ATP. Valine 303 contributes to the D-alanine binding site. ATP contacts are provided by residues aspartate 385, 397 to 400 (YGGR), and lysine 499. Lysine 499 contributes to the D-alanine binding site.

This sequence belongs to the ATP-dependent AMP-binding enzyme family. DltA subfamily.

It localises to the cytoplasm. The enzyme catalyses holo-[D-alanyl-carrier protein] + D-alanine + ATP = D-alanyl-[D-alanyl-carrier protein] + AMP + diphosphate. It participates in cell wall biogenesis; lipoteichoic acid biosynthesis. Functionally, catalyzes the first step in the D-alanylation of lipoteichoic acid (LTA), the activation of D-alanine and its transfer onto the D-alanyl carrier protein (Dcp) DltC. In an ATP-dependent two-step reaction, forms a high energy D-alanyl-AMP intermediate, followed by transfer of the D-alanyl residue as a thiol ester to the phosphopantheinyl prosthetic group of the Dcp. D-alanylation of LTA plays an important role in modulating the properties of the cell wall in Gram-positive bacteria, influencing the net charge of the cell wall. The protein is D-alanine--D-alanyl carrier protein ligase of Streptococcus pyogenes serotype M3 (strain SSI-1).